Consider the following 212-residue polypeptide: MNQFFITSINIIKKQEQMEFLIGFFTEYGYWAVLFVLIICGFGVPIPEDITLVSGGVIAGLYPENVNSHLMLLVSMIGVLAGDSCMYWLGRIYGTKILRFRPIRRIVTLQRLRMVREKFSQYGNRVLFVARFLPGLRAPIYMVSGITRRVSYVRFVLIDFCAAIISVPIWIYLGELGAKNLDWLHTQIQKGQIVIYIFIGYLYYSFLEMEKI.

Helical transmembrane passes span 20–40 (FLIGFFTEYGYWAVLFVLIIC), 70–90 (LMLLVSMIGVLAGDSCMYWLG), 155–175 (FVLIDFCAAIISVPIWIYLGE), and 192–212 (QIVIYIFIGYLYYSFLEMEKI).

Belongs to the DedA family.

It is found in the cell membrane. This is an uncharacterized protein from Haemophilus influenzae (strain ATCC 51907 / DSM 11121 / KW20 / Rd).